The sequence spans 448 residues: tRNA(Ile)-lysidine synthase (448 aa).

Residue 27-32 participates in ATP binding; that stretch reads SGGVDS.

This sequence belongs to the tRNA(Ile)-lysidine synthase family.

Its subcellular location is the cytoplasm. The enzyme catalyses cytidine(34) in tRNA(Ile2) + L-lysine + ATP = lysidine(34) in tRNA(Ile2) + AMP + diphosphate + H(+). Functionally, ligates lysine onto the cytidine present at position 34 of the AUA codon-specific tRNA(Ile) that contains the anticodon CAU, in an ATP-dependent manner. Cytidine is converted to lysidine, thus changing the amino acid specificity of the tRNA from methionine to isoleucine. The chain is tRNA(Ile)-lysidine synthase from Vibrio campbellii (strain ATCC BAA-1116).